The chain runs to 341 residues: Very-long-chain 3-oxoacyl-CoA reductase (341 aa).

The helical transmembrane segment at 17 to 37 (ALYGALLLGVYKLTTFALSLV) threads the bilayer. Residues V63, D117, N144, Y218, K222, V251, and S253 each contribute to the NADP(+) site. The active-site Proton donor is Y218. Residue K222 is the Lowers pKa of active site Tyr of the active site.

This sequence belongs to the short-chain dehydrogenases/reductases (SDR) family.

The protein resides in the endoplasmic reticulum membrane. The enzyme catalyses a very-long-chain (3R)-3-hydroxyacyl-CoA + NADP(+) = a very-long-chain 3-oxoacyl-CoA + NADPH + H(+). Its pathway is lipid metabolism; fatty acid biosynthesis. Functionally, component of the microsomal membrane bound fatty acid elongation system, which produces the 26-carbon very long-chain fatty acids (VLCFA) from palmitate. Catalyzes the reduction of the 3-ketoacyl-CoA intermediate that is formed in each cycle of fatty acid elongation. VLCFAs serve as precursors for ceramide and sphingolipids. The chain is Very-long-chain 3-oxoacyl-CoA reductase from Meyerozyma guilliermondii (strain ATCC 6260 / CBS 566 / DSM 6381 / JCM 1539 / NBRC 10279 / NRRL Y-324) (Yeast).